Here is a 982-residue protein sequence, read N- to C-terminus: ATP-dependent DNA helicase Q5 (982 aa).

The 175-residue stretch at 39-213 (MAVVKGAEDV…FAALHLKQPV (175 aa)) folds into the Helicase ATP-binding domain. 52–59 (MPTGAGKS) lines the ATP pocket. A DEAH box motif is present at residues 157 to 160 (DEAH). One can recognise a Helicase C-terminal domain in the interval 241-398 (NLRDFCLKAL…NKPSDKATLL (158 aa)). Zn(2+)-binding residues include cysteine 412, cysteine 428, cysteine 432, and cysteine 435. Phosphoserine occurs at positions 489 and 492. Positions 491–621 (GSGDEGRDEA…ASKDGQLYDM (131 aa)) are interaction with POLR2A. Threonine 527 carries the post-translational modification Phosphothreonine. The tract at residues 653–726 (PKRVGAGFSK…ALGSSVNCGD (74 aa)) is interaction with RAD51. Disordered stretches follow at residues 675-797 (GKSH…PGKC) and 812-893 (QTEG…AQEP). Serine 728 carries the post-translational modification Phosphoserine; by CDK1.

It belongs to the helicase family. RecQ subfamily. In terms of assembly, monomer. Interacts with TOP2A, TOP3A and TOP3B. Interacts with RNA polymerase II subunit POLR2A. Identified in a complex with the RNA polymerase II core bound to DNA. Interacts with RAD51. Interacts with WRN; this interaction stimulates WRN helicase activity on DNA fork duplexes. Interacts with MUS1; this interaction promotes MUS81-dependent mitotic DNA synthesis. The cofactor is Zn(2+). In terms of processing, phosphorylated by CDK1 at Ser-728; this phosphorylation is required for RECQL5-mediated disruption of RAD51 filaments on stalled replication forks.

The protein localises to the nucleus. Its subcellular location is the nucleoplasm. It catalyses the reaction Couples ATP hydrolysis with the unwinding of duplex DNA by translocating in the 3'-5' direction.. It carries out the reaction ATP + H2O = ADP + phosphate + H(+). In terms of biological role, DNA helicase that plays an important role in DNA replication, transcription and repair. Binds to the RNA polymerase II subunit POLR2A during transcription elongation and suppresses transcription-associated genomic instability. Also associates with POLR1A and enforces the stability of ribosomal DNA arrays. Plays an important role in mitotic chromosome separation after cross-over events and cell cycle progress. Mechanistically, removes RAD51 filaments protecting stalled replication forks at common fragile sites and stimulates MUS81-EME1 endonuclease leading to mitotic DNA synthesis. Required for efficient DNA repair, including repair of inter-strand cross-links. Stimulates DNA decatenation mediated by TOP2A. Prevents sister chromatid exchange and homologous recombination. In Mus musculus (Mouse), this protein is ATP-dependent DNA helicase Q5 (Recql5).